Reading from the N-terminus, the 293-residue chain is DNA repair protein RecO (293 aa).

The protein belongs to the RecO family.

In terms of biological role, involved in DNA repair and RecF pathway recombination. This chain is DNA repair protein RecO, found in Cyanothece sp. (strain PCC 7425 / ATCC 29141).